A 397-amino-acid chain; its full sequence is CCA-adding enzyme (397 aa).

The ATP site is built by G8 and R11. Residues G8 and R11 each coordinate CTP. E21 and D23 together coordinate Mg(2+). Residues R91, R137, and R140 each coordinate ATP. Positions 91, 137, and 140 each coordinate CTP. Positions 213-324 constitute an HD domain; it reads NLDAAIATLK…LALFNGCDAW (112 aa).

This sequence belongs to the tRNA nucleotidyltransferase/poly(A) polymerase family. Bacterial CCA-adding enzyme type 2 subfamily. Requires Mg(2+) as cofactor.

It catalyses the reaction a tRNA precursor + 2 CTP + ATP = a tRNA with a 3' CCA end + 3 diphosphate. It carries out the reaction a tRNA with a 3' CCA end + 2 CTP + ATP = a tRNA with a 3' CCACCA end + 3 diphosphate. Its function is as follows. Catalyzes the addition and repair of the essential 3'-terminal CCA sequence in tRNAs without using a nucleic acid template. Adds these three nucleotides in the order of C, C, and A to the tRNA nucleotide-73, using CTP and ATP as substrates and producing inorganic pyrophosphate. tRNA 3'-terminal CCA addition is required both for tRNA processing and repair. Also involved in tRNA surveillance by mediating tandem CCA addition to generate a CCACCA at the 3' terminus of unstable tRNAs. While stable tRNAs receive only 3'-terminal CCA, unstable tRNAs are marked with CCACCA and rapidly degraded. The protein is CCA-adding enzyme of Alteromonas mediterranea (strain DSM 17117 / CIP 110805 / LMG 28347 / Deep ecotype).